The following is a 362-amino-acid chain: Peptide chain release factor 1 (362 aa).

Gln237 is subject to N5-methylglutamine.

The protein belongs to the prokaryotic/mitochondrial release factor family. Post-translationally, methylated by PrmC. Methylation increases the termination efficiency of RF1.

It localises to the cytoplasm. Peptide chain release factor 1 directs the termination of translation in response to the peptide chain termination codons UAG and UAA. The sequence is that of Peptide chain release factor 1 from Vibrio campbellii (strain ATCC BAA-1116).